A 642-amino-acid chain; its full sequence is Tigger transposable element-derived protein 5 (642 aa).

Composition is skewed to pro residues over residues 1–10 (MYPAGPPAGP) and 19–43 (LPGPPAPAPAPVPAARPPPPAPGPR). Positions 1 to 45 (MYPAGPPAGPVPRRGRRPLPGPPAPAPAPVPAARPPPPAPGPRPR) are disordered. One can recognise an HTH psq-type domain in the interval 47-98 (AVKMAFRKAYSIKDKLQAIERVKGGERQASVCRDFGVPGGTLRGWLKDEPKL). DNA-binding regions (H-T-H motif) lie at residues 74–94 (QASVCRDFGVPGGTLRGWLKD) and 145–178 (PLIQAQAEAFARQIYGPECTFKASHGWFWRWQKR). In terms of domain architecture, HTH CENPB-type spans 112-185 (QRKKMRLANE…QKRHGISSQR (74 aa)). The segment at 185–233 (RFYGEAGPPAPSPAPGPPVKEEPALPSGAGPLPDRAPAPPPPAEGGYGD) is disordered. Pro residues-rich tracts occupy residues 192-202 (PPAPSPAPGPP) and 218-227 (DRAPAPPPPA). 2 DDE-1 domains span residues 233–357 (DEQI…VLLV) and 410–477 (RAHI…ERCW). A disordered region spans residues 535 to 587 (LDDDGGPPEGCREEVGPALPPAAPPAPASLPSAMGGGEDEEEATDYGGTSVPT). A compositionally biased stretch (pro residues) spans 552–562 (ALPPAAPPAPA).

This sequence belongs to the tigger transposable element derived protein family.

It is found in the nucleus. The protein is Tigger transposable element-derived protein 5 (TIGD5) of Homo sapiens (Human).